We begin with the raw amino-acid sequence, 424 residues long: Serine--tRNA ligase (424 aa).

233-235 contributes to the L-serine binding site; sequence TAE. 264–266 is an ATP binding site; that stretch reads RKE. L-serine is bound at residue Glu-287. Residue 351–354 participates in ATP binding; the sequence is EISS. Position 386 (Ser-386) interacts with L-serine.

Belongs to the class-II aminoacyl-tRNA synthetase family. Type-1 seryl-tRNA synthetase subfamily. As to quaternary structure, homodimer. The tRNA molecule binds across the dimer.

It localises to the cytoplasm. The catalysed reaction is tRNA(Ser) + L-serine + ATP = L-seryl-tRNA(Ser) + AMP + diphosphate + H(+). It carries out the reaction tRNA(Sec) + L-serine + ATP = L-seryl-tRNA(Sec) + AMP + diphosphate + H(+). It participates in aminoacyl-tRNA biosynthesis; selenocysteinyl-tRNA(Sec) biosynthesis; L-seryl-tRNA(Sec) from L-serine and tRNA(Sec): step 1/1. In terms of biological role, catalyzes the attachment of serine to tRNA(Ser). Is also able to aminoacylate tRNA(Sec) with serine, to form the misacylated tRNA L-seryl-tRNA(Sec), which will be further converted into selenocysteinyl-tRNA(Sec). The chain is Serine--tRNA ligase from Elusimicrobium minutum (strain Pei191).